Here is a 76-residue protein sequence, read N- to C-terminus: UPF0291 protein BT9727_1737 (76 aa).

This sequence belongs to the UPF0291 family.

The protein resides in the cytoplasm. In Bacillus thuringiensis subsp. konkukian (strain 97-27), this protein is UPF0291 protein BT9727_1737.